The primary structure comprises 426 residues: Histidine--tRNA ligase (426 aa).

Belongs to the class-II aminoacyl-tRNA synthetase family. Homodimer.

It is found in the cytoplasm. It carries out the reaction tRNA(His) + L-histidine + ATP = L-histidyl-tRNA(His) + AMP + diphosphate + H(+). This Streptococcus gordonii (strain Challis / ATCC 35105 / BCRC 15272 / CH1 / DL1 / V288) protein is Histidine--tRNA ligase.